The sequence spans 252 residues: Uridylate kinase (252 aa).

24–27 serves as a coordination point for ATP; sequence KLSG. The interval 32–37 is involved in allosteric activation by GTP; the sequence is GEEGFG. G66 lines the UMP pocket. Positions 67 and 71 each coordinate ATP. UMP is bound by residues D86 and 147 to 154; that span reads TGNPFFTT. ATP is bound by residues T174, Y180, and D183.

The protein belongs to the UMP kinase family. As to quaternary structure, homohexamer.

It is found in the cytoplasm. The enzyme catalyses UMP + ATP = UDP + ADP. Its pathway is pyrimidine metabolism; CTP biosynthesis via de novo pathway; UDP from UMP (UMPK route): step 1/1. Allosterically activated by GTP. Inhibited by UTP. Its function is as follows. Catalyzes the reversible phosphorylation of UMP to UDP. This Alcanivorax borkumensis (strain ATCC 700651 / DSM 11573 / NCIMB 13689 / SK2) protein is Uridylate kinase.